The primary structure comprises 366 residues: Probable methyltransferase-like protein 24 (366 aa).

The signal sequence occupies residues 1–29 (MARERPPGRGCGVLRRCLLGAVLLFGLRL). The interval 36-110 (AGPGSPTRSA…GRPRRKGPRW (75 aa)) is disordered. Over residues 44–63 (SAPPGPAWRPPGPHLPPAPG) the composition is skewed to pro residues. Positions 91–100 (TPEPGCCAPR) are enriched in low complexity.

This sequence belongs to the methyltransferase superfamily.

It localises to the secreted. Its function is as follows. Probable methyltransferase. The protein is Probable methyltransferase-like protein 24 (METTL24) of Homo sapiens (Human).